Consider the following 442-residue polypeptide: Radical S-adenosyl methionine domain-containing protein 1, mitochondrial (442 aa).

The transit peptide at 1 to 22 directs the protein to the mitochondrion; it reads MALPRSQARGWVKAAKMAQRRR. A disordered region spans residues 1 to 37; that stretch reads MALPRSQARGWVKAAKMAQRRRPADDTGGPQSPAPGS. The Radical SAM core domain maps to 34–270; the sequence is APGSQRAALY…RAVLREAGFR (237 aa). Tyrosine 43 is an S-adenosyl-L-methionine binding site. Residues cysteine 49, cysteine 53, and cysteine 56 each contribute to the [4Fe-4S] cluster site. S-adenosyl-L-methionine-binding positions include glycine 98, 99 to 100, glutamate 131, glutamine 158, arginine 170, and aspartate 195; that span reads GT.

This sequence belongs to the anaerobic coproporphyrinogen-III oxidase family. HemW subfamily. The cofactor is [4Fe-4S] cluster.

It localises to the mitochondrion. Functionally, may be a heme chaperone, appears to bind heme. Homologous bacterial proteins do not have oxygen-independent coproporphyrinogen-III oxidase activity. Binds 1 [4Fe-4S] cluster. The cluster is coordinated with 3 cysteines and an exchangeable S-adenosyl-L-methionine. This is Radical S-adenosyl methionine domain-containing protein 1, mitochondrial (RSAD1) from Bos taurus (Bovine).